A 233-amino-acid chain; its full sequence is Large ribosomal subunit protein uL1 (233 aa).

The protein belongs to the universal ribosomal protein uL1 family. Part of the 50S ribosomal subunit.

Its function is as follows. Binds directly to 23S rRNA. The L1 stalk is quite mobile in the ribosome, and is involved in E site tRNA release. Protein L1 is also a translational repressor protein, it controls the translation of the L11 operon by binding to its mRNA. The protein is Large ribosomal subunit protein uL1 of Shewanella loihica (strain ATCC BAA-1088 / PV-4).